A 222-amino-acid chain; its full sequence is CASP-like protein 1E1 (222 aa).

At methionine 1 to cysteine 59 the chain is on the cytoplasmic side. Residues serine 60–valine 80 form a helical membrane-spanning segment. Over aspartate 81 to serine 110 the chain is Extracellular. Residue asparagine 105 is glycosylated (N-linked (GlcNAc...) asparagine). A helical transmembrane segment spans residues alanine 111 to alanine 131. Residues alanine 132–aspartate 146 are Cytoplasmic-facing. A helical transmembrane segment spans residues leucine 147–glycine 167. The Extracellular segment spans residues glutamate 168–arginine 189. The helical transmembrane segment at alanine 190 to leucine 210 threads the bilayer. The Cytoplasmic segment spans residues asparagine 211–tyrosine 222.

Belongs to the Casparian strip membrane proteins (CASP) family. As to quaternary structure, homodimer and heterodimers.

It localises to the cell membrane. The polypeptide is CASP-like protein 1E1 (Sorghum bicolor (Sorghum)).